A 263-amino-acid chain; its full sequence is Methylesterase 4 (263 aa).

Ser-84 acts as the Acyl-ester intermediate in catalysis. Residues Asp-213 and His-241 each act as charge relay system in the active site.

Belongs to the AB hydrolase superfamily. Methylesterase family.

It carries out the reaction methyl salicylate + H2O = salicylate + methanol + H(+). Its pathway is plant hormone biosynthesis. Esterase activity is down-regulated by salicylic acid (SA). In terms of biological role, methylesterase shown to have carboxylesterase activity and methyl salicylate (MeSA) esterase activity in vitro. The sequence is that of Methylesterase 4 from Arabidopsis thaliana (Mouse-ear cress).